A 319-amino-acid polypeptide reads, in one-letter code: Ribosomal RNA small subunit methyltransferase H (319 aa).

Residues 37–39 (GGH), Asp56, Leu90, Asp104, and Gln111 contribute to the S-adenosyl-L-methionine site.

It belongs to the methyltransferase superfamily. RsmH family.

The protein localises to the cytoplasm. It catalyses the reaction cytidine(1402) in 16S rRNA + S-adenosyl-L-methionine = N(4)-methylcytidine(1402) in 16S rRNA + S-adenosyl-L-homocysteine + H(+). Its function is as follows. Specifically methylates the N4 position of cytidine in position 1402 (C1402) of 16S rRNA. In Nocardioides sp. (strain ATCC BAA-499 / JS614), this protein is Ribosomal RNA small subunit methyltransferase H.